Here is a 414-residue protein sequence, read N- to C-terminus: Cyclohex-1-ene-1-carbonyl-CoA dehydrogenase (414 aa).

Residue D124 is the Proton acceptor of the active site. Residues A157, T158, S164, and T190 each contribute to the FAD site. S164 contributes to the cyclohex-1-ene-1-carbonyl-CoA binding site. Cyclohexa-1,5-diene-1-carbonyl-CoA is bound at residue S164. Residues K211, R275, and T396 each coordinate cyclohex-1-ene-1-carbonyl-CoA. Cyclohexa-1,5-diene-1-carbonyl-CoA is bound by residues K211, R275, and T396. FAD is bound by residues T398 and Q400. R408 contacts cyclohex-1-ene-1-carbonyl-CoA. R408 serves as a coordination point for cyclohexa-1,5-diene-1-carbonyl-CoA.

The protein belongs to the acyl-CoA dehydrogenase family. In terms of assembly, homotetramer. FAD serves as cofactor.

The catalysed reaction is cyclohex-1-ene-1-carbonyl-CoA + oxidized [electron-transfer flavoprotein] + H(+) = cyclohexa-1,5-diene-1-carbonyl-CoA + reduced [electron-transfer flavoprotein]. In terms of biological role, mediates the conversion of cyclohex-1-ene-1-carbonyl-CoA (Ch1CoA) into (E)-2-cyclohex-1,5-diene-1-carbonyl-CoA in biosynthesis of cyclohexane-1-carboxylate, a by-product produced during fermentation of benzoate and crotonate to acetate. Also able to further convert (E)-2-cyclohex-1,5-diene-1-carbonyl-CoA to benzoyl-CoA. This Syntrophus aciditrophicus (strain SB) protein is Cyclohex-1-ene-1-carbonyl-CoA dehydrogenase.